The primary structure comprises 683 residues: Tripartite terminase subunit 3 (683 aa).

A Walker A motif motif is present at residues 217–224 (IPRRHGKT). The Walker B motif signature appears at 312-317 (LLYIDE). The active-site For ATPase activity is Glu-317. Catalysis depends on for nuclease activity residues Asp-472, Glu-546, and Asp-658.

This sequence belongs to the herpesviridae TRM3 protein family. In terms of assembly, interacts with the terminase subunits TRM1 and TRM2. Interacts with portal protein.

The protein resides in the host nucleus. Its function is as follows. Component of the molecular motor that translocates viral genomic DNA in empty capsid during DNA packaging. Forms a tripartite terminase complex together with TRM1 and TRM2 in the host cytoplasm. Once the complex reaches the host nucleus, it interacts with the capsid portal vertex. This portal forms a ring in which genomic DNA is translocated into the capsid. TRM3 carries an RNase H-like nuclease activity that plays an important role for the cleavage of concatemeric viral DNA into unit length genomes. The chain is Tripartite terminase subunit 3 from Saimiri sciureus (Common squirrel monkey).